The sequence spans 346 residues: Phosphoribosylformylglycinamidine cyclo-ligase (346 aa).

This sequence belongs to the AIR synthase family.

It is found in the cytoplasm. It catalyses the reaction 2-formamido-N(1)-(5-O-phospho-beta-D-ribosyl)acetamidine + ATP = 5-amino-1-(5-phospho-beta-D-ribosyl)imidazole + ADP + phosphate + H(+). It functions in the pathway purine metabolism; IMP biosynthesis via de novo pathway; 5-amino-1-(5-phospho-D-ribosyl)imidazole from N(2)-formyl-N(1)-(5-phospho-D-ribosyl)glycinamide: step 2/2. This chain is Phosphoribosylformylglycinamidine cyclo-ligase, found in Bacillus cereus (strain AH187).